Here is a 343-residue protein sequence, read N- to C-terminus: S-adenosylmethionine:tRNA ribosyltransferase-isomerase (343 aa).

The protein belongs to the QueA family. Monomer.

The protein localises to the cytoplasm. The enzyme catalyses 7-aminomethyl-7-carbaguanosine(34) in tRNA + S-adenosyl-L-methionine = epoxyqueuosine(34) in tRNA + adenine + L-methionine + 2 H(+). It functions in the pathway tRNA modification; tRNA-queuosine biosynthesis. Its function is as follows. Transfers and isomerizes the ribose moiety from AdoMet to the 7-aminomethyl group of 7-deazaguanine (preQ1-tRNA) to give epoxyqueuosine (oQ-tRNA). The polypeptide is S-adenosylmethionine:tRNA ribosyltransferase-isomerase (Geobacter sulfurreducens (strain ATCC 51573 / DSM 12127 / PCA)).